The primary structure comprises 1034 residues: Receptor-type guanylate cyclase gcy-25 (1034 aa).

Residues 1–16 (MLLLLLLLKISTFVDS) form the signal peptide. Topologically, residues 17 to 409 (FQIGHLEFEN…YDNNLCSDFH (393 aa)) are extracellular. N-linked (GlcNAc...) asparagine glycans are attached at residues N28, N224, N301, N308, and N373. Residues 410–430 (VFMIAAIVFSILLIPMAIAFY) form a helical membrane-spanning segment. The Cytoplasmic portion of the chain corresponds to 431-1034 (LQRKEHLIQQ…DNSKKMFLNV (604 aa)). The 286-residue stretch at 464–749 (RVSTISTARA…KITDAVNREF (286 aa)) folds into the Protein kinase domain. ATP contacts are provided by residues 470-478 (TARASYSSI) and K497. A coiled-coil region spans residues 758–785 (IDQMIEMIDEYSANLEQIVAERTRELEQ). The Guanylate cyclase domain occupies 821-951 (TLLVVDVCQF…DTVNMACRMA (131 aa)).

This sequence belongs to the adenylyl cyclase class-4/guanylyl cyclase family. In terms of tissue distribution, expressed in AQR, PQR and URX sensory neurons.

The protein resides in the cell membrane. It catalyses the reaction GTP = 3',5'-cyclic GMP + diphosphate. In terms of biological role, guanylate cyclase involved in the production of the second messenger cGMP. This Caenorhabditis elegans protein is Receptor-type guanylate cyclase gcy-25.